The primary structure comprises 341 residues: tRNA N6-adenosine threonylcarbamoyltransferase (341 aa).

Fe cation is bound by residues histidine 111 and histidine 115. Residues 134–138 (LVSGG), aspartate 167, glycine 180, and asparagine 276 each bind substrate. Aspartate 304 serves as a coordination point for Fe cation.

This sequence belongs to the KAE1 / TsaD family. It depends on Fe(2+) as a cofactor.

The protein localises to the cytoplasm. It catalyses the reaction L-threonylcarbamoyladenylate + adenosine(37) in tRNA = N(6)-L-threonylcarbamoyladenosine(37) in tRNA + AMP + H(+). Required for the formation of a threonylcarbamoyl group on adenosine at position 37 (t(6)A37) in tRNAs that read codons beginning with adenine. Is involved in the transfer of the threonylcarbamoyl moiety of threonylcarbamoyl-AMP (TC-AMP) to the N6 group of A37, together with TsaE and TsaB. TsaD likely plays a direct catalytic role in this reaction. This chain is tRNA N6-adenosine threonylcarbamoyltransferase, found in Pseudomonas putida (strain ATCC 47054 / DSM 6125 / CFBP 8728 / NCIMB 11950 / KT2440).